We begin with the raw amino-acid sequence, 28 residues long: Ranatuerin-2B (28 aa).

Cysteines 23 and 28 form a disulfide.

Expressed by the skin glands.

It localises to the secreted. Antibacterial activity against Gram-positive bacterium S.aureus and Gram-negative bacterium E.coli. Has activity against C.albicans. The sequence is that of Ranatuerin-2B from Lithobates berlandieri (Rio Grande leopard frog).